The primary structure comprises 265 residues: MSVRVVVCGALGRMGRRIIELALQDKDVEVVGGVEHPDCVPSIDLGEALGKEELKGKPLTSRLEELLPYTDVVIEFSGNPTAAVGHAELTTLEKKAIVIGTTGFTKQEIEQIKEFSKNAPVLLSPNMSLGVNLLFKLAEIAAKVLKDKNFDAEIMEIHHRFKKDAPSGTAMKLAEILSETLEKKNLVFGRKGEAPRKEDEIGVMALRGGDVVGDHTVYFLGFGERIELTHRATSRDTFAKGAVEAAKWIKGKEPGFYTMFDVLGL.

NAD(+) is bound by residues 9–14, 100–102, and 124–127; these read GALGRM, GTT, and SPNM. The active-site Proton donor/acceptor is His158. His159 is a (S)-2,3,4,5-tetrahydrodipicolinate binding site. Lys162 serves as the catalytic Proton donor. 168-169 is a binding site for (S)-2,3,4,5-tetrahydrodipicolinate; the sequence is GT.

It belongs to the DapB family.

Its subcellular location is the cytoplasm. It catalyses the reaction (S)-2,3,4,5-tetrahydrodipicolinate + NAD(+) + H2O = (2S,4S)-4-hydroxy-2,3,4,5-tetrahydrodipicolinate + NADH + H(+). It carries out the reaction (S)-2,3,4,5-tetrahydrodipicolinate + NADP(+) + H2O = (2S,4S)-4-hydroxy-2,3,4,5-tetrahydrodipicolinate + NADPH + H(+). Its pathway is amino-acid biosynthesis; L-lysine biosynthesis via DAP pathway; (S)-tetrahydrodipicolinate from L-aspartate: step 4/4. In terms of biological role, catalyzes the conversion of 4-hydroxy-tetrahydrodipicolinate (HTPA) to tetrahydrodipicolinate. The protein is 4-hydroxy-tetrahydrodipicolinate reductase of Aquifex aeolicus (strain VF5).